The sequence spans 89 residues: DNA/RNA-binding protein Alba (89 aa).

This sequence belongs to the histone-like Alba family.

Its subcellular location is the cytoplasm. It localises to the chromosome. Functionally, binds double-stranded DNA tightly but without sequence specificity. Involved in DNA compaction. This is DNA/RNA-binding protein Alba from Methanothrix thermoacetophila (strain DSM 6194 / JCM 14653 / NBRC 101360 / PT) (Methanosaeta thermophila).